A 944-amino-acid polypeptide reads, in one-letter code: Putative alpha,alpha-trehalose-phosphate synthase [UDP-forming] 106 kDa subunit (944 aa).

Positions 73–84 (TNAQSNIATPSP) are enriched in polar residues. 2 disordered regions span residues 73-113 (TNAQ…NSLS) and 129-166 (SKND…SELE). Residues 101-113 (PSSDSPSLENSLS) show a composition bias toward low complexity. Serine 141, serine 145, serine 149, serine 150, serine 163, and serine 177 each carry phosphoserine. Positions 173–652 (SRSLSFSMNG…AVTFQSLIKE (480 aa)) are glycosyltransferase. At threonine 189 the chain carries Phosphothreonine.

The protein in the N-terminal section; belongs to the glycosyltransferase 20 family.

The enzyme catalyses D-glucose 6-phosphate + UDP-alpha-D-glucose = alpha,alpha-trehalose 6-phosphate + UDP + H(+). The chain is Putative alpha,alpha-trehalose-phosphate synthase [UDP-forming] 106 kDa subunit from Schizosaccharomyces pombe (strain 972 / ATCC 24843) (Fission yeast).